Reading from the N-terminus, the 569-residue chain is Putative potassium-transporting ATPase ATP-binding subunit (569 aa).

Helical transmembrane passes span 34 to 54 (PVMF…LAMV) and 58 to 78 (IAGS…TVLF). D194 functions as the 4-aspartylphosphate intermediate in the catalytic mechanism. ATP contacts are provided by residues D231, E235, 264 to 271 (FTAQSRMS), and K282. Residues D405 and D409 each coordinate Mg(2+). 3 helical membrane passes run 475 to 495 (FAII…LNVM), 503 to 523 (AILS…PLAL), and 543 to 563 (IYGL…DVLL).

Belongs to the cation transport ATPase (P-type) (TC 3.A.3) family. Type IA subfamily. In terms of assembly, the system is composed of three essential subunits: KdpA, KdpB and KdpC.

It is found in the cell inner membrane. The enzyme catalyses K(+)(out) + ATP + H2O = K(+)(in) + ADP + phosphate + H(+). Functionally, part of the high-affinity ATP-driven potassium transport (or Kdp) system, which catalyzes the hydrolysis of ATP coupled with the electrogenic transport of potassium into the cytoplasm. This subunit is responsible for energy coupling to the transport system and for the release of the potassium ions to the cytoplasm. The protein is Putative potassium-transporting ATPase ATP-binding subunit of Salmonella typhi.